The following is a 361-amino-acid chain: MLRLKNDRFIRALLRQPVDRTPVWIMRQAGRYLPEYRQLREKVPNFMAFCKTPELACEATLQPLRRFPLDAAIIFSDILTIPDAMGVDLHIAPTVGPVIRNPVRSAQDVNRLQMPAVEEALSYLFDAIRLTVKALDHRVPLIGFAGSPWTLACYMTEGQSSKTFLTARAMLYQQPDVFHTLLQKLTTLTIAYLNAQIKAGADVVMLFDTWGGLLTPSLYRQFSLDYLSQIAAEVVRQKNGRKIPLIFFTKNGGQWLESIANSGCDAVGLDWTTDIGQARRRVGDRVALQGNLDPAILLSNPESISTAAVDILKSYGQGSGHVFNLGHGIDPSTPIENVAALVEAVQNFSIKNEEPINSYYR.

Substrate-binding positions include 27–31 (RQAGR), D77, Y154, T209, and H327.

This sequence belongs to the uroporphyrinogen decarboxylase family. In terms of assembly, homodimer.

It is found in the cytoplasm. It carries out the reaction uroporphyrinogen III + 4 H(+) = coproporphyrinogen III + 4 CO2. The protein operates within porphyrin-containing compound metabolism; protoporphyrin-IX biosynthesis; coproporphyrinogen-III from 5-aminolevulinate: step 4/4. Its function is as follows. Catalyzes the decarboxylation of four acetate groups of uroporphyrinogen-III to yield coproporphyrinogen-III. The polypeptide is Uroporphyrinogen decarboxylase (Coxiella burnetii (strain Dugway 5J108-111)).